We begin with the raw amino-acid sequence, 208 residues long: Virion protein US10 homolog (208 aa).

Residues 17–61 are disordered; the sequence is ARGAKLSPGQHPRPSHAVRGRTAPGTRSSRRRTCEDGTSGPRDPR. Residues 167-179 fold into a zinc finger; that stretch reads CAFWCCLAHAATC.

This sequence belongs to the herpesviridae US10 family. In terms of processing, phosphorylated.

The protein localises to the virion tegument. The protein resides in the host nucleus matrix. This Homo sapiens (Human) protein is Virion protein US10 homolog.